Reading from the N-terminus, the 473-residue chain is Hyaluronidase-2 (473 aa).

The first 20 residues, 1-20 (MWTGLGPAVTLALVLVVAWA), serve as a signal peptide directing secretion. Disulfide bonds link C47–C343 and C214–C230. 2 N-linked (GlcNAc...) asparagine glycosylation sites follow: N77 and N106. The Proton donor role is filled by E138. N-linked (GlcNAc...) asparagine glycosylation is found at N340 and N360. The 79-residue stretch at 364–442 (AAQYCSWAQC…YLGWGGEQCQ (79 aa)) folds into the EGF-like domain. Intrachain disulfides connect C368/C379, C373/C430, and C432/C441. G451 is lipidated: GPI-anchor amidated glycine. The propeptide at 452-473 (ASGAWAGSHLTGLLAVAVLAFT) is removed in mature form.

This sequence belongs to the glycosyl hydrolase 56 family. As to quaternary structure, interacts with MST1R.

The protein resides in the cell membrane. The enzyme catalyses Random hydrolysis of (1-&gt;4)-linkages between N-acetyl-beta-D-glucosamine and D-glucuronate residues in hyaluronate.. Catalyzes hyaluronan degradation into small fragments that are endocytosed and degraded in lysosomes by HYAL1 and exoglycosidases. Essential for the breakdown of extracellular matrix hyaluronan. The sequence is that of Hyaluronidase-2 (HYAL2) from Bos taurus (Bovine).